The primary structure comprises 684 residues: Gabija protein GajB (684 aa).

One can recognise a UvrD-like helicase ATP-binding domain in the interval 14–351 (EQKSINAIFN…IEVINKIRND (338 aa)). 35 to 42 (SGAGAGKT) contributes to the ATP binding site.

This sequence belongs to the helicase family. As to quaternary structure, homodimer. Interacts with GajA; 2 GajB dimers dock at opposite sides of the GajA complex to form a 4:4 GajA-GajB assembly (GajAB). GajAB interacts with Bacillus phage Phi3T Gad1 protein; this interaction forms a 4:4:8 GajAB-Gad1 complex and leads to GajAB inhibition.

Component of antiviral defense system Gabija type II, composed of GajA and GajB. Expression of Gabija type II in B.subtilis (strain BEST7003) confers resistance to phages phi105, and SpBeta. May be a helicase or contribute to GajA activation. The protein is Gabija protein GajB of Bacillus cereus (strain HuB5-5).